Here is a 496-residue protein sequence, read N- to C-terminus: Probable E3 ubiquitin-protein ligase ARI12 (496 aa).

The TRIAD supradomain stretch occupies residues 110-319 (NEYFCGACGE…GDLHFCTFDA (210 aa)). Zn(2+)-binding residues include C114, C117, C131, H133, C136, C139, C162, C172, C240, C243, H248, C253, C267, C270, C286, and C289. Residues 114-172 (CGACGESHPHKNLASVSCGHRICTRCWTSHINKIISEKPAAEWNLWLKCPVRVGLHASC) form an RING-type 1 zinc finger. Residues 191–253 (FNYNQYLLRS…REDAHSPVDC (63 aa)) form an IBR-type zinc finger. The RING-type 2; atypical zinc-finger motif lies at 267–297 (CPKCKLRIPRNQDNSLKMKCLPCNYVFCWFC).

It belongs to the RBR family. Ariadne subfamily. It depends on Zn(2+) as a cofactor. As to expression, preferentially expressed in roots.

It catalyses the reaction [E2 ubiquitin-conjugating enzyme]-S-ubiquitinyl-L-cysteine + [acceptor protein]-L-lysine = [E2 ubiquitin-conjugating enzyme]-L-cysteine + [acceptor protein]-N(6)-ubiquitinyl-L-lysine.. It participates in protein modification; protein ubiquitination. In terms of biological role, might act as an E3 ubiquitin-protein ligase, or as part of E3 complex, which accepts ubiquitin from specific E2 ubiquitin-conjugating enzymes and then transfers it to substrates. The polypeptide is Probable E3 ubiquitin-protein ligase ARI12 (ARI12) (Arabidopsis thaliana (Mouse-ear cress)).